Reading from the N-terminus, the 190-residue chain is Jupiter microtubule associated homolog 2 (190 aa).

At Met-1 the chain carries N-acetylmethionine. Residues 1 to 190 (MFQVPDSEGG…PGGKSSISFY (190 aa)) are disordered. Ser-30 is modified (phosphoserine). Residue Thr-35 is modified to Phosphothreonine. A compositionally biased stretch (polar residues) spans 35-44 (TPSSRPNRMA). Residues Ser-45, Ser-69, and Ser-97 each carry the phosphoserine modification. A compositionally biased stretch (basic and acidic residues) spans 110-129 (KPKDHVFLCEGEEPKSDLKA). A phosphoserine mark is found at Ser-132 and Ser-144. The segment covering 139–167 (PGEKGSARKAGPAKEQEPMPTVDSHEPRL) has biased composition (basic and acidic residues).

This sequence belongs to the JUPITER family. In terms of assembly, monomer. Dimer. Interacts with TPCN1. Expressed in liver, kidney, prostate, testis and uterus.

Its subcellular location is the cytoplasm. It localises to the nucleus. Nicotinic acid adenine dinucleotide phosphate (NAADP) binding protein required for NAADP-evoked intracellular calcium release. Confers NAADP-sensitivity to the two pore channels (TPCs) complex. Enables NAADP to activate Ca(2+) release from the endoplasmic reticulum through ryanodine receptors. In terms of biological role, (Microbial infection) Involved in the endolysosomal trafficking of human coronavirus SARS-CoV-2. The sequence is that of Jupiter microtubule associated homolog 2 from Homo sapiens (Human).